The chain runs to 240 residues: Large ribosomal subunit protein bL25 (240 aa).

Disordered regions lie at residues 1–20 (MAEN…GPAR) and 220–240 (PAAG…KGKK). Over residues 220–229 (PAAGAAPAKG) the composition is skewed to low complexity. A compositionally biased stretch (basic and acidic residues) spans 230 to 240 (GEAKGGDKGKK).

Belongs to the bacterial ribosomal protein bL25 family. CTC subfamily. As to quaternary structure, part of the 50S ribosomal subunit; part of the 5S rRNA/L5/L18/L25 subcomplex. Contacts the 5S rRNA. Binds to the 5S rRNA independently of L5 and L18.

In terms of biological role, this is one of the proteins that binds to the 5S RNA in the ribosome where it forms part of the central protuberance. The sequence is that of Large ribosomal subunit protein bL25 from Anaeromyxobacter dehalogenans (strain 2CP-C).